The chain runs to 333 residues: DnaJ homolog subfamily C member 25 homolog (333 aa).

A helical transmembrane segment spans residues 8 to 28 (LVLLALLPTMALGLLEGLYCG). Positions 31 to 99 (NCYDVLGVTR…ESRTDYDYML (69 aa)) constitute a J domain. Residues 123–143 (VRVVIVVVLTIVSVIQYYSGW) form a helical membrane-spanning segment. Positions 158–208 (KYRNQALEIARDEIQEKIQKKGKNRMSKNDQRDELERIIRRVIEEKMDVKG) form a coiled coil. The chain crosses the membrane as a helical span at residues 218-238 (VLWVQLIICPYTILSFIVWHA).

The protein belongs to the DNAJC25 family.

The protein localises to the membrane. The sequence is that of DnaJ homolog subfamily C member 25 homolog from Drosophila melanogaster (Fruit fly).